Reading from the N-terminus, the 289-residue chain is MRILEKAPAKINLSLDVRHKRPDGYHEVEMVMTTIDLADRVELTELAEDKVTVSSHNRFVPDDQRNLAYQAAMLMKERYGIKKGVSIFITKVIPVAAGLAGGSSDAAAVFRGLNRLWDLKLSMNELAELGAEIGSDVSFCVHGGTALATGRGEKIRHIETPPHCWVVLAKPTIGVSTAEVYKQLKVDEIEHPDVQGMIAAIEEKNFQKMCDKLGNVLESVTLNMHPEVAMIKNQMKRFGADAVLMSGSGPTVFGLVQYESKVQRIYNGLRGFCDQVYAVRMIGEQNELD.

Residue Lys10 is part of the active site. An ATP-binding site is contributed by Pro94 to Ser104. Asp136 is an active-site residue.

It belongs to the GHMP kinase family. IspE subfamily.

The catalysed reaction is 4-CDP-2-C-methyl-D-erythritol + ATP = 4-CDP-2-C-methyl-D-erythritol 2-phosphate + ADP + H(+). The protein operates within isoprenoid biosynthesis; isopentenyl diphosphate biosynthesis via DXP pathway; isopentenyl diphosphate from 1-deoxy-D-xylulose 5-phosphate: step 3/6. Its function is as follows. Catalyzes the phosphorylation of the position 2 hydroxy group of 4-diphosphocytidyl-2C-methyl-D-erythritol. In Bacillus licheniformis (strain ATCC 14580 / DSM 13 / JCM 2505 / CCUG 7422 / NBRC 12200 / NCIMB 9375 / NCTC 10341 / NRRL NRS-1264 / Gibson 46), this protein is 4-diphosphocytidyl-2-C-methyl-D-erythritol kinase.